Here is a 545-residue protein sequence, read N- to C-terminus: MNTPRCDQTAAWAALAAHHQGAGRQFDLRTAFGADAGRFDAFSLQAPEVFADLSKNHWDATTRGLLLGLARQCQIESRRDAMLAGEPINHTEGRAVLHTALRAPRGAAPFSDDVHGVLDAMLAYVEQVRDTATSGIKHVVNIGIGGSDLGPQMVVPALDAYAQRGLQLHFVSNVDGHDIAPVLRDLNPRETLVIVASKTFTTQETMANAQVARTWFLAGYGEGGEAAIAKHFAASTTNVAAAAKFGITTTFGFWDWVGGRYSLWSAIGLPIALAVGAENFRALLAGAHAMDRHFATAPLESNLPIQLGLLDVWYRNFLGYTSRSIAPYHQGLRRLPAYLQQLEMESNGKCVDLDGASLPYGTCPVVWGEAGTNGQHAYFQMLHQGTDVIPVEFIAVKTPNHGPDVADELKAGLADQHVKLLANCLAQSQALMLGKTTDDALTDKAPTASTALDALTVARHRTFPGNRPSSTLVLDRLSPASLGALIALYEHRVYTSGALWGINSFDQWGVELGKALCNQLLPRFASGESAGLDASTAGLLARLRG.

Glutamate 345 (proton donor) is an active-site residue. Residues histidine 376 and lysine 514 contribute to the active site.

It belongs to the GPI family.

It localises to the cytoplasm. The catalysed reaction is alpha-D-glucose 6-phosphate = beta-D-fructose 6-phosphate. The protein operates within carbohydrate biosynthesis; gluconeogenesis. It functions in the pathway carbohydrate degradation; glycolysis; D-glyceraldehyde 3-phosphate and glycerone phosphate from D-glucose: step 2/4. In terms of biological role, catalyzes the reversible isomerization of glucose-6-phosphate to fructose-6-phosphate. In Leptothrix cholodnii (strain ATCC 51168 / LMG 8142 / SP-6) (Leptothrix discophora (strain SP-6)), this protein is Glucose-6-phosphate isomerase.